The primary structure comprises 429 residues: Glutamate-1-semialdehyde 2,1-aminomutase 2 (429 aa).

At Lys268 the chain carries N6-(pyridoxal phosphate)lysine.

It belongs to the class-III pyridoxal-phosphate-dependent aminotransferase family. HemL subfamily. Homodimer. Requires pyridoxal 5'-phosphate as cofactor.

It localises to the cytoplasm. The enzyme catalyses (S)-4-amino-5-oxopentanoate = 5-aminolevulinate. It participates in porphyrin-containing compound metabolism; protoporphyrin-IX biosynthesis; 5-aminolevulinate from L-glutamyl-tRNA(Glu): step 2/2. This chain is Glutamate-1-semialdehyde 2,1-aminomutase 2, found in Staphylococcus aureus (strain Mu50 / ATCC 700699).